The primary structure comprises 173 residues: Transcription factor E (173 aa).

The HTH TFE/IIEalpha-type domain maps to 3–88; the sequence is NNPIIQQVLL…TWRATFTKLP (86 aa).

It belongs to the TFE family. In terms of assembly, monomer. Interaction with RNA polymerase subunits RpoF and RpoE is necessary for Tfe stimulatory transcription activity. Able to interact with Tbp and RNA polymerase in the absence of DNA promoter. Interacts both with the preinitiation and elongation complexes.

Its function is as follows. Transcription factor that plays a role in the activation of archaeal genes transcribed by RNA polymerase. Facilitates transcription initiation by enhancing TATA-box recognition by TATA-box-binding protein (Tbp), and transcription factor B (Tfb) and RNA polymerase recruitment. Not absolutely required for transcription in vitro, but particularly important in cases where Tbp or Tfb function is not optimal. It dynamically alters the nucleic acid-binding properties of RNA polymerases by stabilizing the initiation complex and destabilizing elongation complexes. Seems to translocate with the RNA polymerase following initiation and acts by binding to the non template strand of the transcription bubble in elongation complexes. This Methanococcus aeolicus (strain ATCC BAA-1280 / DSM 17508 / OCM 812 / Nankai-3) protein is Transcription factor E.